The chain runs to 274 residues: Hydroxyethylthiazole kinase (274 aa).

Methionine 46 contributes to the substrate binding site. ATP-binding residues include arginine 122 and threonine 173. Glycine 200 is a substrate binding site.

Belongs to the Thz kinase family. The cofactor is Mg(2+).

The enzyme catalyses 5-(2-hydroxyethyl)-4-methylthiazole + ATP = 4-methyl-5-(2-phosphooxyethyl)-thiazole + ADP + H(+). The protein operates within cofactor biosynthesis; thiamine diphosphate biosynthesis; 4-methyl-5-(2-phosphoethyl)-thiazole from 5-(2-hydroxyethyl)-4-methylthiazole: step 1/1. Functionally, catalyzes the phosphorylation of the hydroxyl group of 4-methyl-5-beta-hydroxyethylthiazole (THZ). The sequence is that of Hydroxyethylthiazole kinase from Clostridium tetani (strain Massachusetts / E88).